A 907-amino-acid chain; its full sequence is Protein MEI2-like 4 (907 aa).

The disordered stretch occupies residues 28 to 58; it reads QFGFMKNNPMPEGGVDRSSNLPTSSWTSDSY. Residues 44 to 54 are compositionally biased toward polar residues; that stretch reads RSSNLPTSSWT. 2 RRM domains span residues 211 to 284 and 295 to 368; these read RILF…YSIP and GALW…PTCP. The tract at residues 856 to 907 is disordered; it reads AGPNAGDQEPFPMGSNIRSRPGKHRTNSIENYTNFSSSSDNRDEPANGNDSM. Residues 883–894 are compositionally biased toward polar residues; it reads SIENYTNFSSSS.

Probable RNA-binding protein that plays a role in meiosis and vegetative growth. This Arabidopsis thaliana (Mouse-ear cress) protein is Protein MEI2-like 4 (ML4).